The chain runs to 423 residues: Oligopeptide transport ATP-binding protein OppD (423 aa).

In terms of domain architecture, ABC transporter spans 24–309 (IRDLHVSFKV…PVHPYTWALM (286 aa)). 58 to 65 (GESGSGKS) contacts ATP. Residues 398 to 423 (AIKMPSQPVKQPKSNGNKKTKTKSAR) are disordered. Basic residues predominate over residues 413–423 (GNKKTKTKSAR).

Belongs to the ABC transporter superfamily. As to quaternary structure, the complex is composed of two ATP-binding proteins (OppD and OppF), two transmembrane proteins (OppB and OppC) and a solute-binding protein (OppA).

Its subcellular location is the cell membrane. It carries out the reaction a [peptide](out) + ATP + H2O = a [peptide](in) + ADP + phosphate + H(+). Part of the ABC transporter complex OppABCDF involved in the uptake of oligopeptides. Probably responsible for energy coupling to the transport system. This Mycoplasma pneumoniae (strain ATCC 29342 / M129 / Subtype 1) (Mycoplasmoides pneumoniae) protein is Oligopeptide transport ATP-binding protein OppD (oppD).